Here is a 257-residue protein sequence, read N- to C-terminus: Hydroxyacylglutathione hydrolase (257 aa).

The Zn(2+) site is built by His-55, His-57, Asp-59, His-60, His-112, Asp-129, and His-167.

Belongs to the metallo-beta-lactamase superfamily. Glyoxalase II family. Monomer. Requires Zn(2+) as cofactor.

The enzyme catalyses an S-(2-hydroxyacyl)glutathione + H2O = a 2-hydroxy carboxylate + glutathione + H(+). Its pathway is secondary metabolite metabolism; methylglyoxal degradation; (R)-lactate from methylglyoxal: step 2/2. Thiolesterase that catalyzes the hydrolysis of S-D-lactoyl-glutathione to form glutathione and D-lactic acid. The chain is Hydroxyacylglutathione hydrolase from Pseudoalteromonas translucida (strain TAC 125).